A 494-amino-acid chain; its full sequence is UPF0371 protein SPJ_0333 (494 aa).

This sequence belongs to the UPF0371 family.

This Streptococcus pneumoniae (strain JJA) protein is UPF0371 protein SPJ_0333.